We begin with the raw amino-acid sequence, 183 residues long: Putative 3-methyladenine DNA glycosylase (183 aa).

The protein belongs to the DNA glycosylase MPG family.

This is Putative 3-methyladenine DNA glycosylase from Wolbachia pipientis subsp. Culex pipiens (strain wPip).